Consider the following 129-residue polypeptide: Small ribosomal subunit protein uS11 (129 aa).

The protein belongs to the universal ribosomal protein uS11 family. Part of the 30S ribosomal subunit. Interacts with proteins S7 and S18. Binds to IF-3.

In terms of biological role, located on the platform of the 30S subunit, it bridges several disparate RNA helices of the 16S rRNA. Forms part of the Shine-Dalgarno cleft in the 70S ribosome. This is Small ribosomal subunit protein uS11 from Beijerinckia indica subsp. indica (strain ATCC 9039 / DSM 1715 / NCIMB 8712).